A 274-amino-acid chain; its full sequence is Cytochrome b-c1 complex subunit Rieske, mitochondrial (274 aa).

Residues serine 79–serine 103 lie on the Mitochondrial matrix side of the membrane. The helical transmembrane segment at arginine 104–methionine 140 threads the bilayer. Residues serine 141–glycine 274 lie on the Mitochondrial intermembrane side of the membrane. The Rieske domain maps to glutamate 187–isoleucine 272. [2Fe-2S] cluster contacts are provided by cysteine 217, histidine 219, cysteine 236, histidine 239, and serine 241. The cysteines at positions 222 and 238 are disulfide-linked.

It belongs to the Rieske iron-sulfur protein family. Component of the ubiquinol-cytochrome c oxidoreductase (cytochrome b-c1 complex, complex III, CIII), a multisubunit enzyme composed of 11 subunits. The complex is composed of 3 respiratory subunits cytochrome b, cytochrome c1 and Rieske protein UQCRFS1, 2 core protein subunits UQCRC1/QCR1 and UQCRC2/QCR2, and 6 low-molecular weight protein subunits UQCRH/QCR6, UQCRB/QCR7, UQCRQ/QCR8, UQCR10/QCR9, UQCR11/QCR10 and subunit 9, the cleavage product of Rieske protein UQCRFS1. The complex exists as an obligatory dimer and forms supercomplexes (SCs) in the inner mitochondrial membrane with NADH-ubiquinone oxidoreductase (complex I, CI) and cytochrome c oxidase (complex IV, CIV), resulting in different assemblies (supercomplex SCI(1)III(2)IV(1) and megacomplex MCI(2)III(2)IV(2)). Incorporation of the Rieske protein UQCRFS1 is the penultimate step in complex III assembly. Interacts with TTC19, which is involved in the clearance of UQCRFS1 fragments. In terms of assembly, component of the ubiquinol-cytochrome c oxidoreductase (cytochrome b-c1 complex, complex III, CIII). Subunit 9 corresponds to the mitochondrial targeting sequence (MTS) of Rieske protein UQCRFS1. It is retained after processing and incorporated inside complex III, where it remains bound to the complex and localizes between the 2 core subunits UQCRC1/QCR1 and UQCRC2/QCR2. It depends on [2Fe-2S] cluster as a cofactor. Post-translationally, proteolytic processing is necessary for the correct insertion of UQCRFS1 in the complex III dimer. Several fragments are generated during UQCRFS1 insertion, most probably due to the endogenous matrix-processing peptidase (MPP) activity of the 2 core protein subunits UQCRC1/QCR1 and UQCRC2/QCR2, which are homologous to the 2 mitochondrial-processing peptidase (MPP) subunits beta-MPP and alpha-MPP respectively. The action of the protease is also necessary for the clearance of the UQCRFS1 fragments.

It localises to the mitochondrion inner membrane. It carries out the reaction a quinol + 2 Fe(III)-[cytochrome c](out) = a quinone + 2 Fe(II)-[cytochrome c](out) + 2 H(+)(out). In terms of biological role, component of the ubiquinol-cytochrome c oxidoreductase, a multisubunit transmembrane complex that is part of the mitochondrial electron transport chain which drives oxidative phosphorylation. The respiratory chain contains 3 multisubunit complexes succinate dehydrogenase (complex II, CII), ubiquinol-cytochrome c oxidoreductase (cytochrome b-c1 complex, complex III, CIII) and cytochrome c oxidase (complex IV, CIV), that cooperate to transfer electrons derived from NADH and succinate to molecular oxygen, creating an electrochemical gradient over the inner membrane that drives transmembrane transport and the ATP synthase. The cytochrome b-c1 complex catalyzes electron transfer from ubiquinol to cytochrome c, linking this redox reaction to translocation of protons across the mitochondrial inner membrane, with protons being carried across the membrane as hydrogens on the quinol. In the process called Q cycle, 2 protons are consumed from the matrix, 4 protons are released into the intermembrane space and 2 electrons are passed to cytochrome c. The Rieske protein is a catalytic core subunit containing a [2Fe-2S] iron-sulfur cluster. It cycles between 2 conformational states during catalysis to transfer electrons from the quinol bound in the Q(0) site in cytochrome b to cytochrome c1. Incorporation of UQCRFS1 is the penultimate step in complex III assembly. Component of the ubiquinol-cytochrome c oxidoreductase (cytochrome b-c1 complex, complex III, CIII). UQCRFS1 undergoes proteolytic processing once it is incorporated in the complex III dimer. One of the fragments, called subunit 9, corresponds to its mitochondrial targeting sequence (MTS). The proteolytic processing is necessary for the correct insertion of UQCRFS1 in the complex III dimer, but the persistence of UQCRFS1-derived fragments may prevent newly imported UQCRFS1 to be processed and assembled into complex III and is detrimental for the complex III structure and function. This is Cytochrome b-c1 complex subunit Rieske, mitochondrial (UQCRFS1) from Lagothrix lagotricha (Brown woolly monkey).